The chain runs to 1373 residues: DNA-directed RNA polymerase subunit beta'' (1373 aa).

The Zn(2+) site is built by C224, C296, C303, and C306.

Belongs to the RNA polymerase beta' chain family. RpoC2 subfamily. In terms of assembly, in plastids the minimal PEP RNA polymerase catalytic core is composed of four subunits: alpha, beta, beta', and beta''. When a (nuclear-encoded) sigma factor is associated with the core the holoenzyme is formed, which can initiate transcription. Zn(2+) serves as cofactor.

It localises to the plastid. The protein resides in the chloroplast. It carries out the reaction RNA(n) + a ribonucleoside 5'-triphosphate = RNA(n+1) + diphosphate. Functionally, DNA-dependent RNA polymerase catalyzes the transcription of DNA into RNA using the four ribonucleoside triphosphates as substrates. The polypeptide is DNA-directed RNA polymerase subunit beta'' (Amborella trichopoda).